We begin with the raw amino-acid sequence, 512 residues long: Ferredoxin--nitrite reductase (512 aa).

The [4Fe-4S] cluster site is built by cysteine 396, cysteine 402, cysteine 437, and cysteine 441. Cysteine 441 contributes to the siroheme binding site.

Belongs to the nitrite and sulfite reductase 4Fe-4S domain family.

It carries out the reaction 6 oxidized [2Fe-2S]-[ferredoxin] + NH4(+) + 2 H2O = nitrite + 6 reduced [2Fe-2S]-[ferredoxin] + 8 H(+). In Synechococcus elongatus (strain ATCC 33912 / PCC 7942 / FACHB-805) (Anacystis nidulans R2), this protein is Ferredoxin--nitrite reductase (nirA).